A 454-amino-acid polypeptide reads, in one-letter code: Tetrahydroanabasine acetyltransferase (454 aa).

Active-site proton acceptor residues include His-164 and Asp-389.

It belongs to the plant acyltransferase family. In terms of assembly, monomer.

The catalysed reaction is tetrahydroanabasine + acetyl-CoA = ammodendrine + CoA. Its pathway is alkaloid biosynthesis. Its function is as follows. Tetrahydroanabasine acetyltransferase involved in the accumulation of quinolizidine type antinutritional alkaloids (QAs) natural products. QAs impart a bitter taste to plants, acting as repellents and toxicants for herbivores and predators, and possess a variety of pharmacological effects, including sedative, anticonvulsant, anti-inflammatory, antiviral, antitumor, antipyretic, anti-hepatitis B, antifibrotic, antiallergic, antidiarrheal, analgesic and antimicrobial activities. Mediates the conversion of tetrahydroanabasine into ammodendrine. The protein is Tetrahydroanabasine acetyltransferase of Lupinus albus (White lupine).